The chain runs to 195 residues: Large ribosomal subunit protein uL5 (195 aa).

This sequence belongs to the universal ribosomal protein uL5 family. In terms of assembly, part of the 50S ribosomal subunit; part of the 5S rRNA/L5/L18/L25 subcomplex. Contacts the 5S rRNA and the P site tRNA. Forms a bridge to the 30S subunit in the 70S ribosome.

Its function is as follows. This is one of the proteins that bind and probably mediate the attachment of the 5S RNA into the large ribosomal subunit, where it forms part of the central protuberance. In the 70S ribosome it contacts protein S13 of the 30S subunit (bridge B1b), connecting the 2 subunits; this bridge is implicated in subunit movement. Contacts the P site tRNA; the 5S rRNA and some of its associated proteins might help stabilize positioning of ribosome-bound tRNAs. This Leifsonia xyli subsp. xyli (strain CTCB07) protein is Large ribosomal subunit protein uL5.